We begin with the raw amino-acid sequence, 529 residues long: MASFVDRVVLHVSGGTGGHGCVSVHREKFKPLGGPDGGNGGNGGDVILRVDHQTTTLLDYHHAPHRHATNGGPGMGDWRGGKNGETLVLPVPDGTVVKSKDGTVLADLVGEGTEYIAAAGGPGGLGNAALSSQKRRAPGFALLGIEGESSDIVLELKSIADIALVGFPSAGKSSLIAAMSAARPKIADYPFTTLIPNLGVVQAGDVRFTIADVPGLIEGASEGKGLGHNFLRHVERCAALVHVLDCGTLESDRDPLSDLSIIETELEKYAVDMSYAGQDGEVVPLNHRPRLVALNKVDLPDGKDMAEFVRPELESRGYRVFEVSATSHEGLRQLGFAMAEIVKAARDAVEAAPPKVTPTVLRPRAVNETGFRIRREEKAHEPLFRVLGDKPVRWVKQTDFTNEEAIGYLADRLARLGVETELFKMGAKPGDTVVIGEDDGVVFDWEPTMMAGAELLASPRGTDIRFADTGDRPTRSQKREEQQERRDAKAAARAELEAERKAGIWTESVSGRRAAQPIKESGLDSGDES.

In terms of domain architecture, Obg spans 2–159 (ASFVDRVVLH…SDIVLELKSI (158 aa)). Residues 160-343 (ADIALVGFPS…LGFAMAEIVK (184 aa)) enclose the OBG-type G domain. GTP-binding positions include 166-173 (GFPSAGKS), 191-195 (FTTLI), 212-215 (DVPG), 295-298 (NKVD), and 324-326 (SAT). Mg(2+) is bound by residues S173 and T193. The OCT domain occupies 363-447 (PRAVNETGFR…DDGVVFDWEP (85 aa)). The segment at 461-529 (GTDIRFADTG…ESGLDSGDES (69 aa)) is disordered. A compositionally biased stretch (basic and acidic residues) spans 462–502 (TDIRFADTGDRPTRSQKREEQQERRDAKAAARAELEAERKA).

The protein belongs to the TRAFAC class OBG-HflX-like GTPase superfamily. OBG GTPase family. In terms of assembly, monomer. It depends on Mg(2+) as a cofactor.

It is found in the cytoplasm. An essential GTPase which binds GTP, GDP and possibly (p)ppGpp with moderate affinity, with high nucleotide exchange rates and a fairly low GTP hydrolysis rate. Plays a role in control of the cell cycle, stress response, ribosome biogenesis and in those bacteria that undergo differentiation, in morphogenesis control. The chain is GTPase Obg from Pseudarthrobacter chlorophenolicus (strain ATCC 700700 / DSM 12829 / CIP 107037 / JCM 12360 / KCTC 9906 / NCIMB 13794 / A6) (Arthrobacter chlorophenolicus).